We begin with the raw amino-acid sequence, 466 residues long: tRNA modification GTPase MnmE (466 aa).

Residues R22, E87, and R126 each coordinate (6S)-5-formyl-5,6,7,8-tetrahydrofolate. In terms of domain architecture, TrmE-type G spans G222–Y382. A K(+)-binding site is contributed by N232. GTP contacts are provided by residues N232–S237, T251–T257, and D276–G279. Residue S236 coordinates Mg(2+). K(+) contacts are provided by T251, I253, and T256. Residue T257 participates in Mg(2+) binding. Position 466 (K466) interacts with (6S)-5-formyl-5,6,7,8-tetrahydrofolate.

It belongs to the TRAFAC class TrmE-Era-EngA-EngB-Septin-like GTPase superfamily. TrmE GTPase family. As to quaternary structure, homodimer. Heterotetramer of two MnmE and two MnmG subunits. K(+) serves as cofactor.

The protein resides in the cytoplasm. Functionally, exhibits a very high intrinsic GTPase hydrolysis rate. Involved in the addition of a carboxymethylaminomethyl (cmnm) group at the wobble position (U34) of certain tRNAs, forming tRNA-cmnm(5)s(2)U34. The chain is tRNA modification GTPase MnmE from Heliobacterium modesticaldum (strain ATCC 51547 / Ice1).